The following is a 298-amino-acid chain: Methylsterol monooxygenase 1-1 (298 aa).

The next 3 helical transmembrane spans lie at 42–62 (ILFL…VELA), 96–116 (FILV…MIEI), and 118–138 (SGLP…YFLI). A Fatty acid hydroxylase domain is found at 132-267 (LVVYFLIEDY…FTYCDYIYGT (136 aa)). The Histidine box-1 signature appears at 147–151 (HRFFH). Residues 160–164 (HRVHH) carry the Histidine box-2 motif. A helical membrane pass occupies residues 189 to 209 (TFMGPAIAPGHMITFWLWIAL). Residues 239–245 (YHDYHHY) carry the Histidine box-3 motif.

Belongs to the sterol desaturase family. Interacts with ACBP1. It depends on Fe cation as a cofactor. As to expression, expressed in rosettes, stems, roots, floral buds, flowers and siliques.

The protein localises to the endoplasmic reticulum membrane. It carries out the reaction 4,4-dimethyl-5alpha-cholest-7-en-3beta-ol + 6 Fe(II)-[cytochrome b5] + 3 O2 + 5 H(+) = 4alpha-carboxy-4beta-methyl-5alpha-cholest-7-ene-3beta-ol + 6 Fe(III)-[cytochrome b5] + 4 H2O. The catalysed reaction is 24-methylenecycloartanol + 6 Fe(II)-[cytochrome b5] + 3 O2 + 5 H(+) = 4alpha-carboxy-4beta,14alpha-dimethyl-9beta,19-cyclo-5alpha-ergost-24(24(1))-en-3beta-ol + 6 Fe(III)-[cytochrome b5] + 4 H2O. In terms of biological role, non-heme iron oxygenase involved in sterols biosynthesis by catalyzing the removal of the first methyl group at the C-4 position. 4,4-dimethyl-9-beta,19-cyclopropylsterols such as 24-methylenecycloartanol are the preferred substrates. Acts as a rate-limiting enzyme in the sterol pathway via interaction with ACBP1; sterols serve as lipid modulators for gene expression of homeodomain-leucine zipper IV transcription factors. Together with SMO1-2, involved in the maintenance of sterol composition to balance auxin and cytokinin activities during embryogenesis. The protein is Methylsterol monooxygenase 1-1 of Arabidopsis thaliana (Mouse-ear cress).